A 379-amino-acid chain; its full sequence is Pectin lyase A (379 aa).

The signal sequence occupies residues 1–20 (MKTTFLVSLATAALSSTAAA). 2 cysteine pairs are disulfide-bonded: Cys83–Cys102 and Cys92–Cys226. Residue Arg256 is part of the active site. A disulfide bridge links Cys323 with Cys331.

It belongs to the polysaccharide lyase 1 family.

Its subcellular location is the secreted. It carries out the reaction Eliminative cleavage of (1-&gt;4)-alpha-D-galacturonan methyl ester to give oligosaccharides with 4-deoxy-6-O-methyl-alpha-D-galact-4-enuronosyl groups at their non-reducing ends.. Functionally, pectinolytic enzymes consist of four classes of enzymes: pectin lyase, polygalacturonase, pectin methylesterase and rhamnogalacturonase. Among pectinolytic enzymes, pectin lyase is the most important in depolymerization of pectin, since it cleaves internal glycosidic bonds of highly methylated pectins. The chain is Pectin lyase A (pelA) from Emericella nidulans (strain FGSC A4 / ATCC 38163 / CBS 112.46 / NRRL 194 / M139) (Aspergillus nidulans).